The sequence spans 389 residues: MHFAKLGAIGLLGSIICAYAASAASKVIIDNDGLTDLQVLFALQAKQQILGVTAIYGDYTLDDSLFLASDVLSTGNLTYCIPSFAGAAQPLLRTNNTFQIWQELYGSYVWQGYWQPEYETANTNNESYIYNTQISAAQFIIDMVKANPNEITIVAAGPMTNLAIALSIWPDLAKNTKSLVIMGGYVDSQIAQVTGGDFLNDMYSDFNLFMEPEAAQTAITADWPELIIAGNITSQVYPSQSLYNGIIARAGGMANIESDSGLSYAKQFVGNGTLPSGSFPFWDEVASAIAAWPEIVNSSYDAYVSVDTAYDSPFYGSLRMVPADLVPKKGVRTAKASMITGINVAMFYQKIYDSLTAEYSSYCMNGTIITPSNITISNTTNTTNTTGFY.

Residues 1 to 23 (MHFAKLGAIGLLGSIICAYAASA) form the signal peptide.

Belongs to the IUNH family.

The protein localises to the endoplasmic reticulum lumen. This is an uncharacterized protein from Schizosaccharomyces pombe (strain 972 / ATCC 24843) (Fission yeast).